A 525-amino-acid polypeptide reads, in one-letter code: MELGPEPPHRRRLLFACSPPPAPQPVVKALFGTPAAGGLSPVTNLTVTMDQLQGLGSEYEQPIEVKNSSLQRMGSSESTDSGFCLDSPGPLDSKENLENPMRRINSLPQKLLGCSPALKRSHSDSLDHDVFQLIDQDENKENQVFEFKKPIRPASRGCLHVHGLEEGKDVFTQRQNSAPARMLSSNERDGNEPGNSIPFMPQSPVTPTLSDEDDGFMDLLDGENLKNDEETPSCMASLWTAPLVMRRTNNLGNRCKLFDSPSASCSSTIRSMLKRPDRSLEESPGGSRKRRKSVAGASPEEAASPEKPQEILHHQSLSLASSPKGTIENILDNDPRDLIGDFSKGYLFHTVAGKHQDLKYISPEIITSVLNGKFANLIKEFVIIDCRYPYEYEGGHIKGAVNLHMEEEVEEFLLKKPIVPTDGKRVIVVFHCEFSSERGPRMCRYVRERDRLGNEYPKLHYPELYVLKGGYKEFFLKCQSHCEPPSYRPMHHEDFKEDLKKFRTKSRTWAGEKSKREMYSRLKKL.

The short motif at Met73–Phe83 is the Phosphodegron element. Ser75 bears the Phosphoserine; by CHEK1 mark. 3 positions are modified to phosphoserine; by NEK11: Ser78, Ser81, and Ser87. Position 106 is a phosphoserine (Ser106). Position 123 is a phosphoserine; by CHEK1 and CHEK2 (Ser123). The KEN box signature appears at Lys140 to Asn142. Phosphoserine; by CHEK1 is present on Ser177. Disordered regions lie at residues Pro179 to Pro204 and Ser262 to Pro308. A phosphoserine; by CHEK1 and CHEK2 mark is found at Ser279 and Ser293. Residues Val294–Glu306 show a composition bias toward low complexity. Ser322 carries the phosphoserine modification. The Rhodanese domain maps to Leu377 to Glu483. The active site involves Cys432. Position 508 is a phosphothreonine; by CHEK1 (Thr508). 2 positions are modified to phosphoserine; by PLK3: Ser514 and Ser520.

Belongs to the MPI phosphatase family. In terms of assembly, interacts with CCNB1/cyclin B1. Interacts with YWHAE/14-3-3 epsilon when phosphorylated. Interacts with CUL1 specifically when CUL1 is neddylated and active. Interacts with BTRC/BTRCP1 and FBXW11/BTRCP2. Interactions with CUL1, BTRC and FBXW11 are enhanced upon DNA damage. Interacts with HSP90AB1; prevents heat shock-mediated CDC25A degradation and contributes to cell cycle progression. In terms of processing, phosphorylated by CHEK1 on Ser-75, Ser-123, Ser-177, Ser-279, Ser-293 and Thr-508 during checkpoint mediated cell cycle arrest. Also phosphorylated by CHEK2 on Ser-123, Ser-279, and Ser-293 during checkpoint mediated cell cycle arrest. Phosphorylation on Ser-177 and Thr-508 creates binding sites for YWHAE/14-3-3 epsilon which inhibits CDC25A. Phosphorylation on Ser-75, Ser-123, Ser-177, Ser-279 and Ser-293 may also promote ubiquitin-dependent proteolysis of CDC25A by the SCF complex. Phosphorylation of CDC25A at Ser-75 by CHEK1 primes it for subsequent phosphorylation at Ser-78, Ser-81 and Ser-87 by NEK11. Phosphorylation by NEK11 is required for BTRC-mediated polyubiquitination and degradation. Phosphorylation by PIM1 leads to an increase in phosphatase activity. Phosphorylated by PLK3 following DNA damage, leading to promote its ubiquitination and degradation. Post-translationally, ubiquitinated by the anaphase promoting complex/cyclosome (APC/C) ubiquitin ligase complex that contains FZR1/CDH1 during G1 phase leading to its degradation by the proteasome. Ubiquitinated by a SCF complex containing BTRC and FBXW11 during S phase leading to its degradation by the proteasome. Deubiquitination by USP17L2/DUB3 leads to its stabilization.

The catalysed reaction is O-phospho-L-tyrosyl-[protein] + H2O = L-tyrosyl-[protein] + phosphate. Stimulated by B-type cyclins. Stimulated by PIM1-mediated phosphorylation. Functionally, tyrosine protein phosphatase which functions as a dosage-dependent inducer of mitotic progression. Directly dephosphorylates CDK1 and stimulates its kinase activity. Also dephosphorylates CDK2 in complex with cyclin-E, in vitro. The chain is M-phase inducer phosphatase 1 (CDC25A) from Bos taurus (Bovine).